The chain runs to 84 residues: Cell division topological specificity factor (84 aa).

It belongs to the MinE family.

Prevents the cell division inhibition by proteins MinC and MinD at internal division sites while permitting inhibition at polar sites. This ensures cell division at the proper site by restricting the formation of a division septum at the midpoint of the long axis of the cell. The chain is Cell division topological specificity factor from Burkholderia mallei (strain NCTC 10247).